Reading from the N-terminus, the 335-residue chain is Phosphate acyltransferase (335 aa).

Belongs to the PlsX family. Homodimer. Probably interacts with PlsY.

It is found in the cytoplasm. It carries out the reaction a fatty acyl-[ACP] + phosphate = an acyl phosphate + holo-[ACP]. Its pathway is lipid metabolism; phospholipid metabolism. In terms of biological role, catalyzes the reversible formation of acyl-phosphate (acyl-PO(4)) from acyl-[acyl-carrier-protein] (acyl-ACP). This enzyme utilizes acyl-ACP as fatty acyl donor, but not acyl-CoA. In Clostridium botulinum (strain Loch Maree / Type A3), this protein is Phosphate acyltransferase.